The sequence spans 396 residues: Phosphoglycerate kinase (396 aa).

Substrate contacts are provided by residues 20 to 22 (DIN), arginine 35, 58 to 61 (HQGR), arginine 115, and arginine 155. Residues glutamate 328 and 353 to 356 (GGDT) contribute to the ATP site.

The protein belongs to the phosphoglycerate kinase family. Monomer.

The protein resides in the cytoplasm. It carries out the reaction (2R)-3-phosphoglycerate + ATP = (2R)-3-phospho-glyceroyl phosphate + ADP. It participates in carbohydrate degradation; glycolysis; pyruvate from D-glyceraldehyde 3-phosphate: step 2/5. The polypeptide is Phosphoglycerate kinase (Natronomonas pharaonis (strain ATCC 35678 / DSM 2160 / CIP 103997 / JCM 8858 / NBRC 14720 / NCIMB 2260 / Gabara) (Halobacterium pharaonis)).